We begin with the raw amino-acid sequence, 430 residues long: Serine--tRNA ligase (430 aa).

234–236 (TAE) is a binding site for L-serine. 265–267 (RRE) contacts ATP. Residue E288 participates in L-serine binding. 352–355 (EISS) lines the ATP pocket. S388 is a binding site for L-serine.

Belongs to the class-II aminoacyl-tRNA synthetase family. Type-1 seryl-tRNA synthetase subfamily. In terms of assembly, homodimer. The tRNA molecule binds across the dimer.

It is found in the cytoplasm. The enzyme catalyses tRNA(Ser) + L-serine + ATP = L-seryl-tRNA(Ser) + AMP + diphosphate + H(+). It carries out the reaction tRNA(Sec) + L-serine + ATP = L-seryl-tRNA(Sec) + AMP + diphosphate + H(+). Its pathway is aminoacyl-tRNA biosynthesis; selenocysteinyl-tRNA(Sec) biosynthesis; L-seryl-tRNA(Sec) from L-serine and tRNA(Sec): step 1/1. Its function is as follows. Catalyzes the attachment of serine to tRNA(Ser). Is also able to aminoacylate tRNA(Sec) with serine, to form the misacylated tRNA L-seryl-tRNA(Sec), which will be further converted into selenocysteinyl-tRNA(Sec). The protein is Serine--tRNA ligase of Thermosynechococcus vestitus (strain NIES-2133 / IAM M-273 / BP-1).